The primary structure comprises 359 residues: UDP-2-acetamido-2-deoxy-3-oxo-D-glucuronate aminotransferase (359 aa).

UDP-2-acetamido-2-deoxy-alpha-D-ribo-hex-3-uluronate is bound by residues G29, Y31, and S184. K185 bears the N6-(pyridoxal phosphate)lysine mark. R229, H308, and Y309 together coordinate UDP-2-acetamido-2-deoxy-alpha-D-ribo-hex-3-uluronate.

It belongs to the DegT/DnrJ/EryC1 family. In terms of assembly, homodimer. Pyridoxal 5'-phosphate serves as cofactor.

The catalysed reaction is UDP-2-acetamido-2-deoxy-alpha-D-ribo-hex-3-uluronate + L-glutamate = UDP-2-acetamido-3-amino-2,3-dideoxy-alpha-D-glucuronate + 2-oxoglutarate. It participates in bacterial outer membrane biogenesis; LPS O-antigen biosynthesis. Its function is as follows. Plays a role in the biosynthesis of B-band O antigen for serotype O5. Catalyzes the amination of UDP-2-acetamido-2-deoxy-3-oxo-D-glucuronic acid (UDP-3-oxo-D-GlcNAcA) to UDP-2-acetamido-3-amino-2,3-dideoxy-D-glucuronic acid (UDP-GlcNAc3NA), using L-glutamate as the preferred amine donor. This Pseudomonas aeruginosa (strain ATCC 15692 / DSM 22644 / CIP 104116 / JCM 14847 / LMG 12228 / 1C / PRS 101 / PAO1) protein is UDP-2-acetamido-2-deoxy-3-oxo-D-glucuronate aminotransferase.